A 666-amino-acid chain; its full sequence is Transketolase (666 aa).

His-28 contributes to the substrate binding site. Residues His-68 and 116 to 118 (GPL) contribute to the thiamine diphosphate site. Asp-157 provides a ligand contact to Mg(2+). Gly-158 and Asn-187 together coordinate thiamine diphosphate. Mg(2+) contacts are provided by Asn-187 and Ile-189. Residues His-262, Arg-356, and Ser-383 each contribute to the substrate site. His-262 contributes to the thiamine diphosphate binding site. Glu-410 serves as the catalytic Proton donor. Phe-436 provides a ligand contact to thiamine diphosphate. The substrate site is built by His-460, Asp-468, and Arg-519.

This sequence belongs to the transketolase family. In terms of assembly, homodimer. It depends on Mg(2+) as a cofactor. The cofactor is Ca(2+). Mn(2+) is required as a cofactor. Requires Co(2+) as cofactor. Thiamine diphosphate serves as cofactor.

The catalysed reaction is D-sedoheptulose 7-phosphate + D-glyceraldehyde 3-phosphate = aldehydo-D-ribose 5-phosphate + D-xylulose 5-phosphate. Its function is as follows. Catalyzes the transfer of a two-carbon ketol group from a ketose donor to an aldose acceptor, via a covalent intermediate with the cofactor thiamine pyrophosphate. The polypeptide is Transketolase (tkt) (Halalkalibacterium halodurans (strain ATCC BAA-125 / DSM 18197 / FERM 7344 / JCM 9153 / C-125) (Bacillus halodurans)).